A 133-amino-acid polypeptide reads, in one-letter code: Cytidine deaminase (133 aa).

The 123-residue stretch at 4–126 (VDWNMLRGNA…DLLPDAFGLD (123 aa)) folds into the CMP/dCMP-type deaminase domain. 45 to 47 (NVE) lines the substrate pocket. C56 is a binding site for Zn(2+). The active-site Proton donor is E58. Residues C89 and C92 each coordinate Zn(2+).

This sequence belongs to the cytidine and deoxycytidylate deaminase family. Homotetramer. Zn(2+) is required as a cofactor.

The catalysed reaction is cytidine + H2O + H(+) = uridine + NH4(+). It catalyses the reaction 2'-deoxycytidine + H2O + H(+) = 2'-deoxyuridine + NH4(+). Functionally, recycles cytidine and 2-deoxycytidine for uridine and 2-deoxyuridine synthesis, respectively. Catalyzes the hydrolytic deamination of cytidine and 2-deoxycytidine to form, respectively, uridine and 2-deoxyuridine. This chain is Cytidine deaminase (cdd), found in Mycobacterium tuberculosis (strain CDC 1551 / Oshkosh).